Here is a 242-residue protein sequence, read N- to C-terminus: uncharacterized protein (242 aa).

Residues Gly198, Ile218, and Leu227 each contribute to the S-adenosyl-L-methionine site.

Belongs to the class IV-like SAM-binding methyltransferase superfamily. RNA methyltransferase TrmH family.

This is an uncharacterized protein from Mycoplasma pneumoniae (strain ATCC 29342 / M129 / Subtype 1) (Mycoplasmoides pneumoniae).